We begin with the raw amino-acid sequence, 234 residues long: UPF0758 protein STH371 (234 aa).

In terms of domain architecture, MPN spans 110 to 232; that stretch reads DLCNPRAVFE…YTSFRERGLL (123 aa). His181, His183, and Asp194 together coordinate Zn(2+). A JAMM motif motif is present at residues 181–194; the sequence is HNHPSGDPTPSRED.

Belongs to the UPF0758 family.

In Symbiobacterium thermophilum (strain DSM 24528 / JCM 14929 / IAM 14863 / T), this protein is UPF0758 protein STH371.